Reading from the N-terminus, the 264-residue chain is Polyneuridine aldehyde esterase (264 aa).

A propeptide spanning residues 1-6 (MHSAAN) is cleaved from the precursor. Positions 12–122 (HFVLVHGGCL…MMPDPNHSLT (111 aa)) constitute an AB hydrolase-1 domain. Active-site residues include serine 87, aspartate 216, and histidine 244. Serine 87 is a 16-epivellosimine binding site.

It belongs to the AB hydrolase superfamily. As to quaternary structure, homodimer; homodimerizes in aqueous solutions at pH 7.0. As to expression, mainly expressed in roots and, to a lower level, in leaves.

It carries out the reaction polyneuridine aldehyde + H2O = 16-epivellosimine + methanol + CO2. The protein operates within alkaloid biosynthesis; ajmaline biosynthesis. Inhibited by DEPC and HgCl(2). Functionally, hydrolase involved in the biosynthesis of ajmaline-type monoterpenoid indole alkaloids (MIAs) natural products, important plant-derived pharmaceuticals used in the therapy of heart disorders. Catalyzes the hydrolysis of polyneuridine aldehyde into epi-vellosimine, precursor of vomilenine, an intermediate chemical in the biosynthesis of ajmaline. This Rauvolfia serpentina (Serpentine wood) protein is Polyneuridine aldehyde esterase.